We begin with the raw amino-acid sequence, 164 residues long: Large ribosomal subunit protein uL10 (164 aa).

It belongs to the universal ribosomal protein uL10 family. In terms of assembly, part of the ribosomal stalk of the 50S ribosomal subunit. The N-terminus interacts with L11 and the large rRNA to form the base of the stalk. The C-terminus forms an elongated spine to which L12 dimers bind in a sequential fashion forming a multimeric L10(L12)X complex.

Its function is as follows. Forms part of the ribosomal stalk, playing a central role in the interaction of the ribosome with GTP-bound translation factors. In Helicobacter pylori (strain J99 / ATCC 700824) (Campylobacter pylori J99), this protein is Large ribosomal subunit protein uL10 (rplJ).